The following is a 306-amino-acid chain: 4-hydroxy-3-methylbut-2-enyl diphosphate reductase 1 (306 aa).

Position 10 (C10) interacts with [4Fe-4S] cluster. Residues H39 and H72 each coordinate (2E)-4-hydroxy-3-methylbut-2-enyl diphosphate. H39 and H72 together coordinate dimethylallyl diphosphate. Positions 39 and 72 each coordinate isopentenyl diphosphate. C94 is a [4Fe-4S] cluster binding site. H122 is a binding site for (2E)-4-hydroxy-3-methylbut-2-enyl diphosphate. Dimethylallyl diphosphate is bound at residue H122. Position 122 (H122) interacts with isopentenyl diphosphate. E124 (proton donor) is an active-site residue. T162 is a (2E)-4-hydroxy-3-methylbut-2-enyl diphosphate binding site. Residue C192 participates in [4Fe-4S] cluster binding. Residues S220, S221, N222, and S264 each coordinate (2E)-4-hydroxy-3-methylbut-2-enyl diphosphate. The dimethylallyl diphosphate site is built by S220, S221, N222, and S264. The isopentenyl diphosphate site is built by S220, S221, N222, and S264.

It belongs to the IspH family. Requires [4Fe-4S] cluster as cofactor.

It carries out the reaction isopentenyl diphosphate + 2 oxidized [2Fe-2S]-[ferredoxin] + H2O = (2E)-4-hydroxy-3-methylbut-2-enyl diphosphate + 2 reduced [2Fe-2S]-[ferredoxin] + 2 H(+). The catalysed reaction is dimethylallyl diphosphate + 2 oxidized [2Fe-2S]-[ferredoxin] + H2O = (2E)-4-hydroxy-3-methylbut-2-enyl diphosphate + 2 reduced [2Fe-2S]-[ferredoxin] + 2 H(+). It participates in isoprenoid biosynthesis; dimethylallyl diphosphate biosynthesis; dimethylallyl diphosphate from (2E)-4-hydroxy-3-methylbutenyl diphosphate: step 1/1. It functions in the pathway isoprenoid biosynthesis; isopentenyl diphosphate biosynthesis via DXP pathway; isopentenyl diphosphate from 1-deoxy-D-xylulose 5-phosphate: step 6/6. Catalyzes the conversion of 1-hydroxy-2-methyl-2-(E)-butenyl 4-diphosphate (HMBPP) into a mixture of isopentenyl diphosphate (IPP) and dimethylallyl diphosphate (DMAPP). Acts in the terminal step of the DOXP/MEP pathway for isoprenoid precursor biosynthesis. The protein is 4-hydroxy-3-methylbut-2-enyl diphosphate reductase 1 of Rhodopseudomonas palustris (strain ATCC BAA-98 / CGA009).